We begin with the raw amino-acid sequence, 231 residues long: Ribosyldihydronicotinamide dehydrogenase [quinone] (231 aa).

Residues histidine 12 and 18 to 21 (FNGS) each bind FAD. Position 80 is a phosphoserine (serine 80). 104–107 (LYWF) provides a ligand contact to FAD. 127 to 129 (FDI) provides a ligand contact to substrate. FAD contacts are provided by residues 148-151 (TTGG) and tyrosine 156. Zn(2+) is bound by residues histidine 174 and histidine 178. Glutamate 194 is a binding site for FAD. Serine 197 carries the phosphoserine modification. Position 201 (arginine 201) interacts with FAD. Residue cysteine 223 participates in Zn(2+) binding.

This sequence belongs to the NAD(P)H dehydrogenase (quinone) family. As to quaternary structure, homodimer. It depends on Zn(2+) as a cofactor. FAD serves as cofactor.

It localises to the cytoplasm. It carries out the reaction 1-(beta-D-ribofuranosyl)-1,4-dihydronicotinamide + a quinone + H(+) = beta-nicotinamide D-riboside + a quinol. Its function is as follows. The enzyme apparently serves as a quinone reductase in connection with conjugation reactions of hydroquinones involved in detoxification pathways as well as in biosynthetic processes such as the vitamin K-dependent gamma-carboxylation of glutamate residues in prothrombin synthesis. The chain is Ribosyldihydronicotinamide dehydrogenase [quinone] (NQO2) from Pongo abelii (Sumatran orangutan).